The sequence spans 108 residues: Precursor of CEP16 (108 aa).

Residues 1–27 (MVMAKNLTKFYVVFLVVLMMVVSLLLA) form the signal peptide. The propeptide occupies 28 to 92 (IEGRPVKDSS…VGHHRAKGYK (65 aa)). N50 and N98 each carry an N-linked (GlcNAc...) asparagine glycan. Residues 76 to 108 (QSGPSPGVGHHRAKGYKMFGRANDSGPSPGVGH) are disordered. Hydroxyproline occurs at positions 102 and 104.

Belongs to the C-terminally encoded plant signaling peptide (CEP) family. Interacts with CEP receptors (e.g. CEPR1 and CEPR2). The mature small signaling peptide is generated by proteolytic processing of the longer precursor.

It localises to the secreted. The protein resides in the extracellular space. It is found in the apoplast. Functionally, extracellular signaling peptide that may regulate primary root growth rate and systemic nitrogen (N)-demand signaling. The chain is Precursor of CEP16 from Arabidopsis thaliana (Mouse-ear cress).